A 131-amino-acid polypeptide reads, in one-letter code: Rhodopsin (131 aa).

The Extracellular segment spans residues 1–16; sequence CGIDYYTRAPGYNNES. A glycan (N-linked (GlcNAc...) asparagine) is linked at Asn-14. A helical membrane pass occupies residues 17 to 38; the sequence is FVIYMFIVHFLIPLFIISFCYG. Residues 39–66 lie on the Cytoplasmic side of the membrane; the sequence is NLLCAVKAAAAAQEESETTQRAEREVTR. Residues 67–88 traverse the membrane as a helical segment; sequence MVIMMVISYLVSWVPYASVAWY. Residues 89–100 lie on the Extracellular side of the membrane; the sequence is IFSNQGSEFGPV. Residues 101-122 form a helical membrane-spanning segment; the sequence is FMTIPAFFAKSSALYNPLIYVL. Residue Lys-110 is modified to N6-(retinylidene)lysine. The Cytoplasmic portion of the chain corresponds to 123–131; it reads MNKQFRHCM.

The protein belongs to the G-protein coupled receptor 1 family. Opsin subfamily. Phosphorylated on some or all of the serine and threonine residues present in the C-terminal region. Post-translationally, contains one covalently linked retinal chromophore.

It localises to the membrane. The protein localises to the cell projection. It is found in the cilium. The protein resides in the photoreceptor outer segment. In terms of biological role, photoreceptor required for image-forming vision at low light intensity. While most salt water fish species use retinal as chromophore, most freshwater fish use 3-dehydroretinal, or a mixture of retinal and 3-dehydroretinal. Light-induced isomerization of 11-cis to all-trans retinal triggers a conformational change that activates signaling via G-proteins. Subsequent receptor phosphorylation mediates displacement of the bound G-protein alpha subunit by arrestin and terminates signaling. This is Rhodopsin (rho) from Coregonus autumnalis (Arctic cisco).